The sequence spans 1369 residues: Mediator of RNA polymerase II transcription subunit 23 (1369 aa).

The disordered stretch occupies residues 1337–1369 (TESAAPPPPPMNSGSPAPQPNQVPVSVPLTVTQ). Pro residues predominate over residues 1341–1357 (APPPPPMNSGSPAPQPN).

The protein belongs to the Mediator complex subunit 23 family. As to quaternary structure, component of the Mediator complex.

The protein resides in the nucleus. Component of the Mediator complex, a coactivator involved in the regulated transcription of nearly all RNA polymerase II-dependent genes. Mediator functions as a bridge to convey information from gene-specific regulatory proteins to the basal RNA polymerase II transcription machinery. Mediator is recruited to promoters by direct interactions with regulatory proteins and serves as a scaffold for the assembly of a functional preinitiation complex with RNA polymerase II and the general transcription factors. This chain is Mediator of RNA polymerase II transcription subunit 23 (med23), found in Xenopus laevis (African clawed frog).